Reading from the N-terminus, the 242-residue chain is Capsid protein (242 aa).

The Bipartite nuclear localization signal signature appears at 1 to 42 (MPYKRKLTSYFPQSKRFRGAKSGMAVVKTSASRRLYKKGKRK).

The protein belongs to the geminiviridae capsid protein family. As to quaternary structure, homomultimer. Binds to single-stranded and double-stranded viral DNA. Interacts (via nuclear localization signal) with host importin alpha-1a.

Its subcellular location is the virion. The protein resides in the host nucleus. In terms of biological role, encapsidates the viral genome into characteristic twinned ('geminate') particles. Binds the genomic viral ssDNA and shuttles it into and out of the cell nucleus. Plays a role in protection of the genome from degradation, virus acquisition and transmission by insect vectors, infectivity, and systemic movement. The CP of monopartite geminiviruses is absolutely essential for virus movement. This Solanum lycopersicum (Tomato) protein is Capsid protein.